Consider the following 212-residue polypeptide: WAP four-disulfide core domain protein 1 (212 aa).

Residues 1–26 form the signal peptide; that stretch reads MGSCDRKALWALSFLLLLLGSSSVQG. The tract at residues 43-62 is disordered; that stretch reads EEVAATGSRQPHADRCPPPP. One can recognise a WAP domain in the interval 51–100; the sequence is RQPHADRCPPPPRTLPPGACQATRCQSDSECPRHRRCCYNGCAYACLEAV. 4 disulfide bridges follow: Cys58–Cys88, Cys70–Cys92, Cys75–Cys87, and Cys81–Cys96. The disordered stretch occupies residues 191–212; sequence EYPEGDSKYVAEPGKGQQRHFP.

Vascular smooth muscle and prostate. Periacinar ring.

Its subcellular location is the secreted. Functionally, has growth inhibitory activity. The chain is WAP four-disulfide core domain protein 1 (Wfdc1) from Rattus norvegicus (Rat).